The following is a 1720-amino-acid chain: TOG array regulator of axonemal microtubules protein 1 (1720 aa).

TOG regions lie at residues Glu-94 to Glu-312 and Pro-352 to Ser-596. HEAT repeat units follow at residues Ala-175 to Gly-212, Val-214 to Leu-247, Leu-251 to Gln-289, Asn-345 to Pro-384, Ser-390 to Glu-427, Gln-431 to Val-466, Gly-467 to Glu-504, and Phe-506 to Ser-543. 4 stretches are compositionally biased toward polar residues: residues Phe-794–Ser-809, Pro-819–His-829, Asp-842–Pro-852, and Leu-868–Thr-877. Disordered regions lie at residues Phe-794–Pro-924, His-970–Asp-998, and Lys-1067–Gln-1087. Positions Ala-1073 to Gln-1087 are enriched in polar residues. Residues Glu-1256–Gln-1425 are TOG 3. HEAT repeat units follow at residues Thr-1294–Lys-1331 and Gln-1335–Pro-1372. A disordered region spans residues Gly-1430 to Phe-1462. The span at Thr-1446–Ser-1458 shows a compositional bias: polar residues. The TOG 4 stretch occupies residues Ser-1484–Leu-1720. 3 HEAT repeats span residues Leu-1485–Asp-1522, Gly-1526–Asp-1563, and Pro-1567–Asn-1605.

Belongs to the Crescerin family. In terms of assembly, interacts with ARMC9, CCDC66, CEP104 and CSPP1.

The protein localises to the cell projection. It localises to the cilium. The protein resides in the cytoplasm. It is found in the cytoskeleton. Its subcellular location is the cilium axoneme. Involved in ciliogenesis. It is required for appropriate acetylation and polyglutamylation of ciliary microtubules, and regulation of cilium length. Interacts with microtubules and promotes microtubule polymerization via its HEAT repeat domains, especially those in TOG region 2 and 4. In Homo sapiens (Human), this protein is TOG array regulator of axonemal microtubules protein 1.